The chain runs to 356 residues: Histidinol-phosphate aminotransferase (356 aa).

Lysine 214 carries the N6-(pyridoxal phosphate)lysine modification.

This sequence belongs to the class-II pyridoxal-phosphate-dependent aminotransferase family. Histidinol-phosphate aminotransferase subfamily. Homodimer. The cofactor is pyridoxal 5'-phosphate.

The enzyme catalyses L-histidinol phosphate + 2-oxoglutarate = 3-(imidazol-4-yl)-2-oxopropyl phosphate + L-glutamate. Its pathway is amino-acid biosynthesis; L-histidine biosynthesis; L-histidine from 5-phospho-alpha-D-ribose 1-diphosphate: step 7/9. This chain is Histidinol-phosphate aminotransferase, found in Escherichia coli O6:K15:H31 (strain 536 / UPEC).